The sequence spans 229 residues: DNA mismatch repair protein MutH (229 aa).

It belongs to the MutH family.

The protein resides in the cytoplasm. Functionally, sequence-specific endonuclease that cleaves unmethylated GATC sequences. It is involved in DNA mismatch repair. The chain is DNA mismatch repair protein MutH from Shigella flexneri serotype 5b (strain 8401).